Reading from the N-terminus, the 330-residue chain is Nitrilase 3 (330 aa).

A CN hydrolase domain is found at 4–273 (VKAAAVQISP…EGEVIVDLDF (270 aa)). E44 serves as the catalytic Proton acceptor. K128 functions as the Proton donor in the catalytic mechanism. C162 acts as the Nucleophile in catalysis. The disordered stretch occupies residues 310–330 (RAAHPVSGAEQGPEDLRTPAA).

Belongs to the carbon-nitrogen hydrolase superfamily. Nitrilase family.

The catalysed reaction is a nitrile + 2 H2O = a carboxylate + NH4(+). Its function is as follows. Nitrilases catalyze the mild hydrolytic conversion of organonitriles directly to the corresponding carboxylic acids. This chain is Nitrilase 3, found in Unknown prokaryotic organism.